Reading from the N-terminus, the 195-residue chain is 2-amino-4-hydroxy-6-hydroxymethyldihydropteridine pyrophosphokinase (195 aa).

This sequence belongs to the HPPK family.

It catalyses the reaction 6-hydroxymethyl-7,8-dihydropterin + ATP = (7,8-dihydropterin-6-yl)methyl diphosphate + AMP + H(+). The protein operates within cofactor biosynthesis; tetrahydrofolate biosynthesis; 2-amino-4-hydroxy-6-hydroxymethyl-7,8-dihydropteridine diphosphate from 7,8-dihydroneopterin triphosphate: step 4/4. Its function is as follows. Catalyzes the transfer of pyrophosphate from adenosine triphosphate (ATP) to 6-hydroxymethyl-7,8-dihydropterin, an enzymatic step in folate biosynthesis pathway. The protein is 2-amino-4-hydroxy-6-hydroxymethyldihydropteridine pyrophosphokinase (folK) of Synechocystis sp. (strain ATCC 27184 / PCC 6803 / Kazusa).